The sequence spans 394 residues: Phloroisovalerophenone synthase (394 aa).

Cys166 is a catalytic residue.

It belongs to the thiolase-like superfamily. Chalcone/stilbene synthases family. As to quaternary structure, homodimer. As to expression, expressed in lupulin gland. Present at low levels in leaves but accumulates in cones.

It catalyses the reaction 3-methylbutanoyl-CoA + 3 malonyl-CoA + 3 H(+) = phlorisovalerophenone + 3 CO2 + 4 CoA. The catalysed reaction is (E)-4-coumaroyl-CoA + 3 malonyl-CoA + 3 H(+) = 2',4,4',6'-tetrahydroxychalcone + 3 CO2 + 4 CoA. The enzyme catalyses 2-methylpropanoyl-CoA + 3 malonyl-CoA + 3 H(+) = phlorisobutanophenone + 3 CO2 + 4 CoA. Its pathway is secondary metabolite biosynthesis. In terms of biological role, involved in the biosynthesis of prenylated phenolics natural products which contribute to the bitter taste of beer and display broad biological activities. Polyketide synthase that can use 3-methylbutanoyl-CoA (isovaleryl-CoA) and 2-methylpropanoyl-CoA (isobutyryl-CoA) as substrates to produce phlorisovalerophenone (PIVP) and phlorisobutyrophenone (2-methyl-1-(2,4,6-trihydroxyphenyl)propan-1-one), respectively, intermediates in the biosynthesis of the bitter acids (alpha and beta) acids. Can also produce naringenin-chalcone (2',4,4',6'-tetrahydroxychalcone) from 4-coumaroyl-CoA with a lower efficiency. This Humulus lupulus (European hop) protein is Phloroisovalerophenone synthase.